The sequence spans 283 residues: 4-diphosphocytidyl-2-C-methyl-D-erythritol kinase (283 aa).

The active site involves K13. ATP is bound at residue 96–106 (PMGGGIGGGSS). D138 is a catalytic residue.

It belongs to the GHMP kinase family. IspE subfamily.

The catalysed reaction is 4-CDP-2-C-methyl-D-erythritol + ATP = 4-CDP-2-C-methyl-D-erythritol 2-phosphate + ADP + H(+). It functions in the pathway isoprenoid biosynthesis; isopentenyl diphosphate biosynthesis via DXP pathway; isopentenyl diphosphate from 1-deoxy-D-xylulose 5-phosphate: step 3/6. In terms of biological role, catalyzes the phosphorylation of the position 2 hydroxy group of 4-diphosphocytidyl-2C-methyl-D-erythritol. This is 4-diphosphocytidyl-2-C-methyl-D-erythritol kinase from Pseudomonas fluorescens (strain Pf0-1).